We begin with the raw amino-acid sequence, 130 residues long: Phosphoribosyl-AMP cyclohydrolase (130 aa).

Residue Asp77 coordinates Mg(2+). A Zn(2+)-binding site is contributed by Cys78. Positions 79 and 81 each coordinate Mg(2+). Zn(2+)-binding residues include Cys95 and Cys102.

Belongs to the PRA-CH family. As to quaternary structure, homodimer. Mg(2+) is required as a cofactor. It depends on Zn(2+) as a cofactor.

It is found in the cytoplasm. It carries out the reaction 1-(5-phospho-beta-D-ribosyl)-5'-AMP + H2O = 1-(5-phospho-beta-D-ribosyl)-5-[(5-phospho-beta-D-ribosylamino)methylideneamino]imidazole-4-carboxamide. It functions in the pathway amino-acid biosynthesis; L-histidine biosynthesis; L-histidine from 5-phospho-alpha-D-ribose 1-diphosphate: step 3/9. Catalyzes the hydrolysis of the adenine ring of phosphoribosyl-AMP. This is Phosphoribosyl-AMP cyclohydrolase from Pseudomonas putida (strain GB-1).